The following is a 153-amino-acid chain: Ergochrome gene cluster protein CPUR_05425 (153 aa).

It participates in pigment biosynthesis. Part of the ergochrome gene cluster responsible for the typical purple-black color of the ergot sclerotia. The ergochrome gene cluster produces several ergot pigments including the yellow ergochrome secalonic acid and its derivatives, as well as the red anthraquinones endocrocin and clavorubin. The pathway begins with the synthesis of atrochrysone thioester by the polyketide synthase (PKS) CPUR_05437. The atrochrysone carboxyl ACP thioesterase CPUR_05436 then breaks the thioester bond and releases the atrochrysone carboxylic acid from CPUR_05437. The atrochrysone carboxylic acid is then converted to atrochrysone which is further transformed into emodin anthrone. The next step is performed by the anthrone oxygenase CPUR_05434 that catalyzes the oxidation of emodinanthrone to emodin. Emodin is further modified to yield monodictyphenone via several steps involving CPUR_05427, CPUR_05428, CPUR_05429 and CPUR_05430. The short chain dehydrogenase/reductase CPUR_05418 then catalyzes the C-5 ketoreduction to give the xanthone skeleton of the monomeric units. Ergochromes formation requires further dimerization steps of different xanthone units, probably catalyzed by the cytochrome P450 monooxygenase CPUR_05419. CPUR_05425, CPUR_05426 and CPUR_05431 are unique to Claviceps, thus it is likely that they are involved in further modification of xanthone units or in their dimerization. The yellow ergochromes and the red anthraquinone pigments endocrocin and clavorubin are products from the same PKS derived precursors and the latter are likely shunt products in the pathway of xanthone biosynthesis. It is proposed that atrochrysone carboxylic acid released from the PKS CPUR_05437 can also be converted to endocrocin anthrone which is further oxidized into endocrocin by CPUR_05435. Endocrocin could be then modified to clavorubin, possibly by CPUR_05423 and CPUR_05431. Clavorubin is the principal anthraquinone metabolite produced by the cluster with a much higher yield compared to endocrocin. In Claviceps purpurea (strain 20.1) (Ergot fungus), this protein is Ergochrome gene cluster protein CPUR_05425.